We begin with the raw amino-acid sequence, 277 residues long: Ribosomal RNA small subunit methyltransferase A (277 aa).

Positions 23, 25, 50, 75, 98, and 121 each coordinate S-adenosyl-L-methionine.

It belongs to the class I-like SAM-binding methyltransferase superfamily. rRNA adenine N(6)-methyltransferase family. RsmA subfamily.

It localises to the cytoplasm. The catalysed reaction is adenosine(1518)/adenosine(1519) in 16S rRNA + 4 S-adenosyl-L-methionine = N(6)-dimethyladenosine(1518)/N(6)-dimethyladenosine(1519) in 16S rRNA + 4 S-adenosyl-L-homocysteine + 4 H(+). Its function is as follows. Specifically dimethylates two adjacent adenosines (A1518 and A1519) in the loop of a conserved hairpin near the 3'-end of 16S rRNA in the 30S particle. May play a critical role in biogenesis of 30S subunits. In Paraburkholderia xenovorans (strain LB400), this protein is Ribosomal RNA small subunit methyltransferase A.